The sequence spans 668 residues: Neurexin-3-beta (668 aa).

Residues 1 to 35 (MHLRTNPSICPGRRPAWTLWMCSLFWGCIVSSVWS) form the signal peptide. The Extracellular portion of the chain corresponds to 36 to 593 (SSNVASSASS…EVVRESSSTT (558 aa)). The Laminin G-like domain occupies 84 to 284 (ATYIFGKSGG…NPNIKINGSV (201 aa)). The interval 510-529 (TASSSTGMVPKLPAGKMNNR) is disordered. The helical transmembrane segment at 594 to 614 (GMVVGIVAAAALCILILLYAM) threads the bilayer. Over 615–668 (YKYRNRDEGSYQVDETRNYISNSAQSNGTLMKEKQQSSKSGHKKQKNKDKEYYV) the chain is Cytoplasmic. A disordered region spans residues 636–668 (NSAQSNGTLMKEKQQSSKSGHKKQKNKDKEYYV).

This sequence belongs to the neurexin family. Processed by alpha-secretase leading to the formation of an extracellular soluble protein as well as a C-terminal membrane-embedded fragment (CTF). Proteolysis of these CTFs by gamma-secretase releases intracellular domains (ICDs) and extracellular peptides. As to expression, brain and arteries (at protein level).

It localises to the membrane. Neuronal cell surface protein that may be involved in cell recognition and cell adhesion. Plays a role in angiogenesis. This chain is Neurexin-3-beta (NRXN3), found in Gallus gallus (Chicken).